The sequence spans 346 residues: Probable electron transfer flavoprotein subunit alpha, mitochondrial (346 aa).

FAD is bound at residue 285–313 (LYVAVGISGAIQHLAGMKESKMIVAINKD).

The protein belongs to the ETF alpha-subunit/FixB family. In terms of assembly, heterodimer of an alpha and a beta subunit. It depends on FAD as a cofactor.

Its subcellular location is the mitochondrion matrix. The electron transfer flavoprotein serves as a specific electron acceptor for several dehydrogenases, including five acyl-CoA dehydrogenases, glutaryl-CoA and sarcosine dehydrogenase. It transfers the electrons to the main mitochondrial respiratory chain via ETF-ubiquinone oxidoreductase (ETF dehydrogenase). The protein is Probable electron transfer flavoprotein subunit alpha, mitochondrial (ETF1) of Cryptococcus neoformans var. grubii (Filobasidiella neoformans var. grubii).